Reading from the N-terminus, the 420-residue chain is Gamma-glutamyl phosphate reductase (420 aa).

Belongs to the gamma-glutamyl phosphate reductase family.

The protein resides in the cytoplasm. It carries out the reaction L-glutamate 5-semialdehyde + phosphate + NADP(+) = L-glutamyl 5-phosphate + NADPH + H(+). It functions in the pathway amino-acid biosynthesis; L-proline biosynthesis; L-glutamate 5-semialdehyde from L-glutamate: step 2/2. Catalyzes the NADPH-dependent reduction of L-glutamate 5-phosphate into L-glutamate 5-semialdehyde and phosphate. The product spontaneously undergoes cyclization to form 1-pyrroline-5-carboxylate. This Neisseria meningitidis serogroup A / serotype 4A (strain DSM 15465 / Z2491) protein is Gamma-glutamyl phosphate reductase.